Here is a 76-residue protein sequence, read N- to C-terminus: U-scoloptoxin(13)-Sm1a (76 aa).

Residues Met-1–Ala-22 form the signal peptide.

The protein belongs to the scoloptoxin-13 family. Post-translationally, contains 4 disulfide bonds. Expressed by the venom gland.

It localises to the secreted. The chain is U-scoloptoxin(13)-Sm1a from Scolopendra morsitans (Tanzanian blue ringleg centipede).